The following is a 556-amino-acid chain: 2-succinyl-5-enolpyruvyl-6-hydroxy-3-cyclohexene-1-carboxylate synthase (556 aa).

This sequence belongs to the TPP enzyme family. MenD subfamily. Homodimer. Mg(2+) serves as cofactor. The cofactor is Mn(2+). Thiamine diphosphate is required as a cofactor.

It catalyses the reaction isochorismate + 2-oxoglutarate + H(+) = 5-enolpyruvoyl-6-hydroxy-2-succinyl-cyclohex-3-ene-1-carboxylate + CO2. It functions in the pathway quinol/quinone metabolism; 1,4-dihydroxy-2-naphthoate biosynthesis; 1,4-dihydroxy-2-naphthoate from chorismate: step 2/7. It participates in quinol/quinone metabolism; menaquinone biosynthesis. In terms of biological role, catalyzes the thiamine diphosphate-dependent decarboxylation of 2-oxoglutarate and the subsequent addition of the resulting succinic semialdehyde-thiamine pyrophosphate anion to isochorismate to yield 2-succinyl-5-enolpyruvyl-6-hydroxy-3-cyclohexene-1-carboxylate (SEPHCHC). This Escherichia coli O17:K52:H18 (strain UMN026 / ExPEC) protein is 2-succinyl-5-enolpyruvyl-6-hydroxy-3-cyclohexene-1-carboxylate synthase.